The sequence spans 677 residues: MTQVAKKILVTCALPYANGSIHLGHMLEHIQADVWVRYQRMRGHEVNFICADDAHGTPIMLKAQQLGITPEQMIGEMSQEHQTDFAGFNISYDNYHSTHSEENRQLSELIYSRLKENGFIKNRTISQLYDPEKGMFLPDRFVKGTCPKCKSPDQYGDNCEVCGATYSPTELIEPKSVVSGATPVMRDSEHFFFDLPSFSEMLQAWTRSGALQEQVANKMQEWFESGLQQWDISRDAPYFGFEIPNAPGKYFYVWLDAPIGYMGSFKNLCDKRGDTTSFDEYWKKDSTAELYHFIGKDIVYFHSLFWPAMLEGSNFRKPTNLFVHGYVTVNGAKMSKSRGTFIKASTWLNHFDADSLRYYYTAKLSSRIDDIDLNLEDFVQRVNADIVNKVVNLASRNAGFINKRFDGVLASELADPQLYKTFTDAAEVIGEAWESREFGKAIREIMALADLANRYVDEQAPWVVAKQEGRDADLQAICSMGINLFRVLMTYLKPVLPKLTERAEAFLNTELTWHGIQQPLLGHKVNPFKALYNRIDMKQVEALVEASKEEVKAAATPVTGPLADDPIQETITFDDFAKVDLRVALIENAEFVEGSDKLLRLTLDLGGEKRNVFSGIRSAYPDPQALIGRHTIMVANLAPRKMRFGISEGMVMAAGPGGKDIFLLSPDAGAKPGHQVK.

The short motif at 15-25 (PYANGSIHLGH) is the 'HIGH' region element. Zn(2+) contacts are provided by C146, C149, C159, and C162. The short motif at 333–337 (KMSKS) is the 'KMSKS' region element. Position 336 (K336) interacts with ATP. Residues 575–677 (DFAKVDLRVA…AGAKPGHQVK (103 aa)) form the tRNA-binding domain.

The protein belongs to the class-I aminoacyl-tRNA synthetase family. MetG type 1 subfamily. In terms of assembly, homodimer. It depends on Zn(2+) as a cofactor.

It localises to the cytoplasm. It carries out the reaction tRNA(Met) + L-methionine + ATP = L-methionyl-tRNA(Met) + AMP + diphosphate. In terms of biological role, is required not only for elongation of protein synthesis but also for the initiation of all mRNA translation through initiator tRNA(fMet) aminoacylation. The chain is Methionine--tRNA ligase from Escherichia coli O17:K52:H18 (strain UMN026 / ExPEC).